Consider the following 880-residue polypeptide: Translation initiation factor IF-2 (880 aa).

Disordered stretches follow at residues 51–78 (KQHG…GSTG), 93–116 (YVKR…QAAN), and 142–293 (KEAD…FEKP). Positions 69–78 (STLNVKGSTG) are enriched in polar residues. Residues 142–229 (KEADEKAKKA…ARKKAAEGGD (88 aa)) are compositionally biased toward basic and acidic residues. Basic residues predominate over residues 269-279 (GRRTRRGKKQR). The tr-type G domain maps to 380–549 (SRAPVVTIMG…LLQAEMLDLS (170 aa)). The tract at residues 389–396 (GHVDHGKT) is G1. 389–396 (GHVDHGKT) is a GTP binding site. A G2 region spans residues 414-418 (GITQH). The segment at 435-438 (DTPG) is G3. GTP is bound by residues 435 to 439 (DTPGH) and 489 to 492 (NKID). The tract at residues 489 to 492 (NKID) is G4. Residues 525-527 (SAK) form a G5 region.

Belongs to the TRAFAC class translation factor GTPase superfamily. Classic translation factor GTPase family. IF-2 subfamily.

It is found in the cytoplasm. Its function is as follows. One of the essential components for the initiation of protein synthesis. Protects formylmethionyl-tRNA from spontaneous hydrolysis and promotes its binding to the 30S ribosomal subunits. Also involved in the hydrolysis of GTP during the formation of the 70S ribosomal complex. This chain is Translation initiation factor IF-2, found in Psychromonas ingrahamii (strain DSM 17664 / CCUG 51855 / 37).